We begin with the raw amino-acid sequence, 317 residues long: MDCVTNATTRCRKGSIVVIVMPPLISNNTFFLMNTTNDGNGGSVSYDYPLLSNQNSLITNTTNNLTSDSTNTDISNETPILSNNTPILMNTPTNPNSDSDTTTPTVVSHTVELITEEKKVISKIVYSDGTEDVKELDLTDFYNSAYNEGYSAGVNSVDFSKTGYIIENGIIKVTTTLTNGKSQEYNITLDENLVVSLYNQIMANKSSCFQIRQNETEYSFLVESRQYQPQPNLAYQPAVDGTPVYEVLGQEQKTWSFTLYVDSIPKMQFLQQLASNPLIEVYFDEIGDWKQALIQSISLSRITTGHYYADIELIILE.

Over residues 68–78 (DSTNTDISNET) the composition is skewed to low complexity. The interval 68–87 (DSTNTDISNETPILSNNTPI) is disordered.

This is an uncharacterized protein from Methanocaldococcus jannaschii (strain ATCC 43067 / DSM 2661 / JAL-1 / JCM 10045 / NBRC 100440) (Methanococcus jannaschii).